Consider the following 879-residue polypeptide: Alanine--tRNA ligase (879 aa).

Zn(2+)-binding residues include His-567, His-571, Cys-669, and His-673.

This sequence belongs to the class-II aminoacyl-tRNA synthetase family. Zn(2+) serves as cofactor.

It localises to the cytoplasm. The enzyme catalyses tRNA(Ala) + L-alanine + ATP = L-alanyl-tRNA(Ala) + AMP + diphosphate. Functionally, catalyzes the attachment of alanine to tRNA(Ala) in a two-step reaction: alanine is first activated by ATP to form Ala-AMP and then transferred to the acceptor end of tRNA(Ala). Also edits incorrectly charged Ser-tRNA(Ala) and Gly-tRNA(Ala) via its editing domain. In Lactobacillus helveticus (strain DPC 4571), this protein is Alanine--tRNA ligase.